The following is a 530-amino-acid chain: Alpha-(1,3)-fucosyltransferase 4 (530 aa).

Disordered regions lie at residues 1-48 (MRRL…RAVP) and 66-112 (HLGG…STPA). Residues 1 to 147 (MRRLWGAARK…GGRRGWRRGR (147 aa)) lie on the Cytoplasmic side of the membrane. Residues 88-106 (ASGERQRRLEPQLQHESRC) show a composition bias toward basic and acidic residues. The helical; Signal-anchor for type II membrane protein transmembrane segment at 148–172 (GLPWTVCVLAAAGLTCTALITYACW) threads the bilayer. Over 173–530 (GQLPPLPWAS…IRNLASWFER (358 aa)) the chain is Lumenal. 2 N-linked (GlcNAc...) asparagine glycosylation sites follow: asparagine 216 and asparagine 315.

Belongs to the glycosyltransferase 10 family. As to expression, expressed at low levels in bone marrow-derived mesenchymal stem cells. Expressed in cord blood immature promyelocytes and in peripheral blood myeloid and lymphoid cell populations.

Its subcellular location is the golgi apparatus. The protein resides in the golgi stack membrane. It carries out the reaction a beta-D-galactosyl-(1-&gt;4)-N-acetyl-beta-D-glucosaminyl derivative + GDP-beta-L-fucose = a beta-D-galactosyl-(1-&gt;4)-[alpha-L-fucosyl-(1-&gt;3)]-N-acetyl-beta-D-glucosaminyl derivative + GDP + H(+). The catalysed reaction is an N-acetyl-alpha-neuraminyl-(2-&gt;3)-beta-D-galactosyl-(1-&gt;4)-N-acetyl-beta-D-glucosaminyl derivative + GDP-beta-L-fucose = an alpha-Neu5Ac-(2-&gt;3)-beta-D-Gal-(1-&gt;4)-[alpha-L-Fuc-(1-&gt;3)]-beta-D-GlcNAc derivative + GDP + H(+). The enzyme catalyses an alpha-Neu5Ac-(2-&gt;3)-beta-D-Gal-(1-&gt;4)-beta-D-GlcNAc-(1-&gt;3)-beta-D-Gal-(1-&gt;4)-beta-D-GlcNAc derivative + GDP-beta-L-fucose = an alpha-Neu5Ac-(2-&gt;3)-beta-D-Gal-(1-&gt;4)-beta-D-GlcNAc-(1-&gt;3)-beta-D-Gal-(1-&gt;4)-[alpha-L-Fuc-(1-&gt;3)]-beta-D-GlcNAc derivative + GDP + H(+). It catalyses the reaction an alpha-Neu5Ac-(2-&gt;3)-beta-D-Gal-(1-&gt;4)-beta-D-GlcNAc6S derivative + GDP-beta-L-fucose = an alpha-Neu5Ac-(2-&gt;3)-beta-D-Gal-(1-&gt;4)-[alpha-L-Fuc-(1-&gt;3)]-beta-D-GlcNAc6S derivative + GDP + H(+). The protein operates within protein modification; protein glycosylation. Functionally, catalyzes alpha(1-&gt;3) linkage of fucosyl moiety transferred from GDP-beta-L-fucose to N-acetyl glucosamine (GlcNAc) within type 2 lactosamine (LacNAc, Gal-beta(1-&gt;4)GlcNAc) glycan attached to N- or O-linked glycoproteins. Robustly fucosylates nonsialylated distal LacNAc unit of the polylactosamine chain to form Lewis X antigen (CD15), a glycan determinant known to mediate important cellular functions in development and immunity. Fucosylates with lower efficiency sialylated LacNAc acceptors to form sialyl Lewis X and 6-sulfo sialyl Lewis X determinants that serve as recognition epitopes for C-type lectins. Together with FUT7 contributes to SELE, SELL and SELP selectin ligand biosynthesis and selectin-dependent lymphocyte homing, leukocyte migration and blood leukocyte homeostasis. In a cell type specific manner, may also fucosylate the internal LacNAc unit of the polylactosamine chain to form VIM-2 antigen that serves as recognition epitope for SELE. Its function is as follows. Does not generate Lewis X antigens. The protein is Alpha-(1,3)-fucosyltransferase 4 of Homo sapiens (Human).